The chain runs to 541 residues: Histone acetyltransferase ESA1 (541 aa).

Over residues 1-11 (MAVAEIKKEKG) the composition is skewed to basic and acidic residues. A disordered region spans residues 1–31 (MAVAEIKKEKGSSLSPEPSSPIQILSTEPDA). Residues 12–30 (SSLSPEPSSPIQILSTEPD) are compositionally biased toward polar residues. The region spanning 47–97 (PGCKVHVSKDGEFRLAEILQEHIKKGRKVFYVHYQDFNKRLDEWIELDRID) is the Tudor-knot domain. Positions 111 to 154 (TKENKSKKKSKSKGQTKLSKNNTTANSTTGTPQPSDGQPIMGDD) are disordered. Residues 115–124 (KSKKKSKSKG) are compositionally biased toward basic residues. A compositionally biased stretch (polar residues) spans 131–146 (NNTTANSTTGTPQPSD). The 334-residue stretch at 196-529 (ARVRNLSTII…LNPKLLHWTP (334 aa)) folds into the MYST-type HAT domain. The segment at 229–254 (IYICDFTLSYFGSKKQFERFRSKCSM) adopts a C2HC MYST-type; degenerate zinc-finger fold. An ESA1-RPD3 motif motif is present at residues 279 to 300 (RTWCRNLCLLSKLFLDHKTLYY). K296 bears the N6-acetyllysine; by autocatalysis mark. Acetyl-CoA contacts are provided by residues 337 to 341 (ACILT) and 346 to 352 (QKRGFGK). E372 acts as the Proton donor/acceptor in catalysis. S376 provides a ligand contact to acetyl-CoA. The segment at 413-438 (YDEAENGKDSSATPTPGPGSNASQSS) is disordered.

This sequence belongs to the MYST (SAS/MOZ) family. Component of the NuA4 histone acetyltransferase complex. Autoacetylation at Lys-296 is required for proper function.

It is found in the nucleus. The protein resides in the chromosome. The catalysed reaction is L-lysyl-[histone] + acetyl-CoA = N(6)-acetyl-L-lysyl-[histone] + CoA + H(+). It catalyses the reaction L-lysyl-[protein] + acetyl-CoA = N(6)-acetyl-L-lysyl-[protein] + CoA + H(+). The enzyme catalyses 2-hydroxyisobutanoyl-CoA + L-lysyl-[protein] = N(6)-(2-hydroxyisobutanoyl)-L-lysyl-[protein] + CoA + H(+). It carries out the reaction (2E)-butenoyl-CoA + L-lysyl-[protein] = N(6)-(2E)-butenoyl-L-lysyl-[protein] + CoA + H(+). Catalytic component of the NuA4 histone acetyltransferase (HAT) complex which is involved in epigenetic transcriptional activation of selected genes principally by acetylation of nucleosomal histones H4, H3, H2B, H2A and H2A variant H2A.Z. Acetylates histone H4 to form H4K5ac, H4K8ac, H4K12ac and H4K16ac, histone H3 to form H3K14ac, and histone H2A to form H2AK4ac and H2AK7ac. The NuA4 complex is involved in the DNA damage response and is required for chromosome segregation. The NuA4 complex plays a direct role in repair of DNA double-strand breaks (DSBs) through homologous recombination. Recruitment to promoters depends on H3K4me. Also acetylates non-histone proteins. In addition to protein acetyltransferase, can use different acyl-CoA substrates, such as 2-hydroxyisobutanoyl-CoA (2-hydroxyisobutyryl-CoA) or (2E)-butenoyl-CoA (crotonyl-CoA), and is able to mediate protein 2-hydroxyisobutyrylation and crotonylation, respectively. In Candida albicans (strain SC5314 / ATCC MYA-2876) (Yeast), this protein is Histone acetyltransferase ESA1 (ESA1).